We begin with the raw amino-acid sequence, 220 residues long: Large ribosomal subunit protein uL3 (220 aa).

Residues Lys-61–Asp-81 form a disordered region.

Belongs to the universal ribosomal protein uL3 family. As to quaternary structure, part of the 50S ribosomal subunit. Forms a cluster with proteins L14 and L19.

Functionally, one of the primary rRNA binding proteins, it binds directly near the 3'-end of the 23S rRNA, where it nucleates assembly of the 50S subunit. The chain is Large ribosomal subunit protein uL3 from Staphylococcus epidermidis (strain ATCC 35984 / DSM 28319 / BCRC 17069 / CCUG 31568 / BM 3577 / RP62A).